A 210-amino-acid polypeptide reads, in one-letter code: Na(+)-translocating NADH-quinone reductase subunit D (210 aa).

The next 5 helical transmembrane spans lie at 42–62 (FVMTLAVTAVTAFSNLFISLI), 72–92 (IIAQMAVIASLVIVVDQVLKA), 103–123 (VFVGLIITNCIVMGRAEAYAM), 131–151 (FLDGIGNGLGYGAVLLTVATV), and 178–198 (NGLLLLPPSAFFIIGLIIWGV).

This sequence belongs to the NqrDE/RnfAE family. Composed of six subunits; NqrA, NqrB, NqrC, NqrD, NqrE and NqrF.

Its subcellular location is the cell inner membrane. It catalyses the reaction a ubiquinone + n Na(+)(in) + NADH + H(+) = a ubiquinol + n Na(+)(out) + NAD(+). Functionally, NQR complex catalyzes the reduction of ubiquinone-1 to ubiquinol by two successive reactions, coupled with the transport of Na(+) ions from the cytoplasm to the periplasm. NqrA to NqrE are probably involved in the second step, the conversion of ubisemiquinone to ubiquinol. The polypeptide is Na(+)-translocating NADH-quinone reductase subunit D (Aeromonas salmonicida (strain A449)).